The following is a 243-amino-acid chain: DNA repair protein RecO (243 aa).

This sequence belongs to the RecO family.

Functionally, involved in DNA repair and RecF pathway recombination. The protein is DNA repair protein RecO of Caulobacter sp. (strain K31).